The sequence spans 325 residues: Beta-1,3-galactosyltransferase 6 (325 aa).

Over 1-11 (MKVFRRAWRHR) the chain is Cytoplasmic. Residues 12-30 (VALGLGGLAFCGTTLLYLA) form a helical; Signal-anchor for type II membrane protein membrane-spanning segment. Residues 31–325 (RCASEGETPS…QCCQRKEGVP (295 aa)) are Lumenal-facing. A glycan (N-linked (GlcNAc...) asparagine) is linked at Asn-127.

It belongs to the glycosyltransferase 31 family. It depends on Mn(2+) as a cofactor.

It localises to the golgi apparatus. Its subcellular location is the golgi stack membrane. It carries out the reaction 3-O-(beta-D-galactosyl-(1-&gt;4)-beta-D-xylosyl)-L-seryl-[protein] + UDP-alpha-D-galactose = 3-O-(beta-D-galactosyl-(1-&gt;3)-beta-D-galactosyl-(1-&gt;4)-beta-D-xylosyl)-L-seryl-[protein] + UDP + H(+). It participates in glycan metabolism; chondroitin sulfate biosynthesis. Its pathway is glycan metabolism; heparan sulfate biosynthesis. Beta-1,3-galactosyltransferase that transfers galactose from UDP-galactose to substrates with a terminal beta-linked galactose residue. Has a preference for galactose-beta-1,4-xylose that is found in the linker region of glycosaminoglycans, such as heparan sulfate and chondroitin sulfate. Has no activity towards substrates with terminal glucosamine or galactosamine residues. The polypeptide is Beta-1,3-galactosyltransferase 6 (B3galt6) (Mus musculus (Mouse)).